Here is a 258-residue protein sequence, read N- to C-terminus: Acetylglutamate kinase (258 aa).

Residues 41–42 (GG), arginine 63, and asparagine 156 contribute to the substrate site.

Belongs to the acetylglutamate kinase family. ArgB subfamily.

The protein localises to the cytoplasm. It catalyses the reaction N-acetyl-L-glutamate + ATP = N-acetyl-L-glutamyl 5-phosphate + ADP. It functions in the pathway amino-acid biosynthesis; L-arginine biosynthesis; N(2)-acetyl-L-ornithine from L-glutamate: step 2/4. In terms of biological role, catalyzes the ATP-dependent phosphorylation of N-acetyl-L-glutamate. The protein is Acetylglutamate kinase of Bacillus velezensis (strain DSM 23117 / BGSC 10A6 / LMG 26770 / FZB42) (Bacillus amyloliquefaciens subsp. plantarum).